The chain runs to 243 residues: Putative glycerophosphodiester phosphodiesterase YhdW (243 aa).

Residues 1–238 (MYIIAHRGAS…DYPDFIIKDG (238 aa)) enclose the GP-PDE domain. H6 serves as the catalytic Proton acceptor. 2 residues coordinate Ca(2+): E33 and D35. Residue H48 is the Proton donor of the active site. E107 lines the Ca(2+) pocket.

Belongs to the glycerophosphoryl diester phosphodiesterase family. Ca(2+) serves as cofactor.

The enzyme catalyses a sn-glycero-3-phosphodiester + H2O = an alcohol + sn-glycerol 3-phosphate + H(+). Glycerophosphodiester phosphodiesterase hydrolyzes glycerophosphodiesters into glycerol-3-phosphate (G3P) and the corresponding alcohol. The protein is Putative glycerophosphodiester phosphodiesterase YhdW (yhdW) of Bacillus subtilis (strain 168).